The sequence spans 413 residues: Histidinol-phosphate aminotransferase, chloroplastic (413 aa).

Residues 1–35 (MGVIELCNTSSICIGRANPSCCSIERNQRRRIICM) constitute a chloroplast transit peptide. Position 273 is an N6-(pyridoxal phosphate)lysine (lysine 273).

It belongs to the class-II pyridoxal-phosphate-dependent aminotransferase family. Histidinol-phosphate aminotransferase subfamily. In terms of assembly, homodimer. The cofactor is pyridoxal 5'-phosphate. Expressed in flowers, leaves, stems and roots.

The protein resides in the plastid. The protein localises to the chloroplast. The enzyme catalyses L-histidinol phosphate + 2-oxoglutarate = 3-(imidazol-4-yl)-2-oxopropyl phosphate + L-glutamate. It participates in amino-acid biosynthesis; L-histidine biosynthesis; L-histidine from 5-phospho-alpha-D-ribose 1-diphosphate: step 7/9. In Nicotiana plumbaginifolia (Leadwort-leaved tobacco), this protein is Histidinol-phosphate aminotransferase, chloroplastic (HPA).